A 605-amino-acid chain; its full sequence is Pescadillo homolog (605 aa).

Residues Pro346–Pro440 enclose the BRCT domain. Positions Ser449–Lys553 are disordered. The span at Ala461 to Glu508 shows a compositional bias: acidic residues. Residues Glu526 to Asp537 show a composition bias toward basic and acidic residues. The stretch at Ser533–Lys605 forms a coiled coil.

This sequence belongs to the pescadillo family. As to quaternary structure, component of the NOP7 complex, composed of ERB1, NOP7 and YTM1. The complex is held together by ERB1, which interacts with NOP7 via its N-terminal domain and with YTM1 via a high-affinity interaction between the seven-bladed beta-propeller domains of the 2 proteins. The NOP7 complex associates with the 66S pre-ribosome.

The protein resides in the nucleus. It is found in the nucleolus. It localises to the nucleoplasm. Its function is as follows. Component of the NOP7 complex, which is required for maturation of the 25S and 5.8S ribosomal RNAs and formation of the 60S ribosome. This Kluyveromyces lactis (strain ATCC 8585 / CBS 2359 / DSM 70799 / NBRC 1267 / NRRL Y-1140 / WM37) (Yeast) protein is Pescadillo homolog.